Here is a 194-residue protein sequence, read N- to C-terminus: Orotate phosphoribosyltransferase (194 aa).

116 to 124 serves as a coordination point for 5-phospho-alpha-D-ribose 1-diphosphate; that stretch reads EDIVTTGLS. Orotate contacts are provided by Thr-120 and Arg-148.

It belongs to the purine/pyrimidine phosphoribosyltransferase family. PyrE subfamily. Homodimer. Mg(2+) is required as a cofactor.

The catalysed reaction is orotidine 5'-phosphate + diphosphate = orotate + 5-phospho-alpha-D-ribose 1-diphosphate. Its pathway is pyrimidine metabolism; UMP biosynthesis via de novo pathway; UMP from orotate: step 1/2. In terms of biological role, catalyzes the transfer of a ribosyl phosphate group from 5-phosphoribose 1-diphosphate to orotate, leading to the formation of orotidine monophosphate (OMP). This Caulobacter vibrioides (strain ATCC 19089 / CIP 103742 / CB 15) (Caulobacter crescentus) protein is Orotate phosphoribosyltransferase.